A 482-amino-acid chain; its full sequence is PHD finger protein At3g20280 (482 aa).

The PHD-type zinc finger occupies A45–A97. Disordered stretches follow at residues T188–S210 and S314–A482. Low complexity predominate over residues S314–S324. Composition is skewed to polar residues over residues A377 to P386 and Q393 to S428. Residues D447–A482 show a composition bias toward basic and acidic residues.

The sequence is that of PHD finger protein At3g20280 from Arabidopsis thaliana (Mouse-ear cress).